The following is a 427-amino-acid chain: Peptidase B (427 aa).

Lysine 195 and aspartate 200 together coordinate Mn(2+). The active site involves lysine 207. 3 residues coordinate Mn(2+): aspartate 218, aspartate 277, and glutamate 279. Arginine 281 is a catalytic residue.

It belongs to the peptidase M17 family. Homohexamer. It depends on Mn(2+) as a cofactor.

It is found in the cytoplasm. The enzyme catalyses Release of an N-terminal amino acid, Xaa, from a peptide or arylamide. Xaa is preferably Glu or Asp but may be other amino acids, including Leu, Met, His, Cys and Gln.. Its function is as follows. Probably plays an important role in intracellular peptide degradation. This is Peptidase B from Escherichia coli (strain SMS-3-5 / SECEC).